Reading from the N-terminus, the 649-residue chain is Beta-galactosidase-1-like protein 3 (649 aa).

The active-site Proton donor is Glu203. Glu277 (nucleophile) is an active-site residue.

It belongs to the glycosyl hydrolase 35 family.

This Mus musculus (Mouse) protein is Beta-galactosidase-1-like protein 3 (Glb1l3).